The sequence spans 160 residues: MIP18 family protein F45G2.10 (160 aa).

The interval 1 to 32 is disordered; it reads MGQERLDNANPTLFDSKPRHRPVTGTERDESV.

It belongs to the MIP18 family.

Functionally, may play a role in chromosome segregation through establishment of sister chromatid cohesion. The polypeptide is MIP18 family protein F45G2.10 (Caenorhabditis elegans).